The following is a 28-amino-acid chain: Ornatin-D (28 aa).

The protein belongs to the ornatin family.

It is found in the secreted. In terms of biological role, potent inhibitor of fibrinogen interaction with platelet receptors expressed on glycoprotein IIb-IIIa complex. May prevent blood from clotting during either feeding and/or storage of ingested blood. The polypeptide is Ornatin-D (Placobdella ornata (Turtle leech)).